The sequence spans 370 residues: Cytochrome b (370 aa).

Transmembrane regions (helical) follow at residues 30–50 (FGSM…FLAF), 74–96 (WIFR…LHIF), 109–129 (VWMS…MGYV), and 175–195 (FFVL…GHLI). Heme b contacts are provided by H80 and H94. The heme b site is built by H179 and H193. H198 lines the a ubiquinone pocket. 4 helical membrane passes run 221 to 240 (YIGK…VLSL), 284 to 304 (VLGV…ALVN), 316 to 336 (FLVF…QCMV), and 342 to 362 (VLSP…LGIF).

Belongs to the cytochrome b family. In terms of assembly, the main subunits of complex b-c1 are: cytochrome b, cytochrome c1 and the Rieske protein. It depends on heme b as a cofactor.

It is found in the mitochondrion inner membrane. In terms of biological role, component of the ubiquinol-cytochrome c reductase complex (complex III or cytochrome b-c1 complex) that is part of the mitochondrial respiratory chain. The b-c1 complex mediates electron transfer from ubiquinol to cytochrome c. Contributes to the generation of a proton gradient across the mitochondrial membrane that is then used for ATP synthesis. The polypeptide is Cytochrome b (ctb-1) (Caenorhabditis briggsae).